A 226-amino-acid polypeptide reads, in one-letter code: Enolase-phosphatase E1 (226 aa).

Belongs to the HAD-like hydrolase superfamily. MasA/MtnC family. As to quaternary structure, monomer. Mg(2+) serves as cofactor.

The enzyme catalyses 5-methylsulfanyl-2,3-dioxopentyl phosphate + H2O = 1,2-dihydroxy-5-(methylsulfanyl)pent-1-en-3-one + phosphate. The protein operates within amino-acid biosynthesis; L-methionine biosynthesis via salvage pathway; L-methionine from S-methyl-5-thio-alpha-D-ribose 1-phosphate: step 3/6. It functions in the pathway amino-acid biosynthesis; L-methionine biosynthesis via salvage pathway; L-methionine from S-methyl-5-thio-alpha-D-ribose 1-phosphate: step 4/6. In terms of biological role, bifunctional enzyme that catalyzes the enolization of 2,3-diketo-5-methylthiopentyl-1-phosphate (DK-MTP-1-P) into the intermediate 2-hydroxy-3-keto-5-methylthiopentenyl-1-phosphate (HK-MTPenyl-1-P), which is then dephosphorylated to form the acireductone 1,2-dihydroxy-3-keto-5-methylthiopentene (DHK-MTPene). The chain is Enolase-phosphatase E1 from Alcanivorax borkumensis (strain ATCC 700651 / DSM 11573 / NCIMB 13689 / SK2).